A 132-amino-acid chain; its full sequence is MKAITSNVSKSLPIGARLKCIDNTGAREVEIISVKGFKGVRRRLASAGVGDMVVISVKKGTADMRREVTTAVVVRQKKEYRRADGLRVKFEDNAAVIITEDGVLKGSEIRGPIAKEAADLWPAIGSAASIIV.

This sequence belongs to the universal ribosomal protein uL14 family. Part of the 50S ribosomal subunit. Forms a cluster with proteins L3 and L24e, part of which may contact the 16S rRNA in 2 intersubunit bridges.

Functionally, binds to 23S rRNA. Forms part of two intersubunit bridges in the 70S ribosome. The chain is Large ribosomal subunit protein uL14 from Methanosphaera stadtmanae (strain ATCC 43021 / DSM 3091 / JCM 11832 / MCB-3).